Consider the following 132-residue polypeptide: L-ectoine synthase (132 aa).

Belongs to the ectoine synthase family.

It carries out the reaction (2S)-4-acetamido-2-aminobutanoate = L-ectoine + H2O. Its pathway is amine and polyamine biosynthesis; ectoine biosynthesis; L-ectoine from L-aspartate 4-semialdehyde: step 3/3. Catalyzes the circularization of gamma-N-acetyl-alpha,gamma-diaminobutyric acid (ADABA) to ectoine (1,4,5,6-tetrahydro-2-methyl-4-pyrimidine carboxylic acid), which is an excellent osmoprotectant. The protein is L-ectoine synthase of Teredinibacter turnerae (strain ATCC 39867 / T7901).